A 411-amino-acid polypeptide reads, in one-letter code: 2,3-bisphosphoglycerate-independent phosphoglycerate mutase (411 aa).

This sequence belongs to the BPG-independent phosphoglycerate mutase family. A-PGAM subfamily. In terms of assembly, homotetramer. Mg(2+) serves as cofactor.

The enzyme catalyses (2R)-2-phosphoglycerate = (2R)-3-phosphoglycerate. It participates in carbohydrate degradation; glycolysis; pyruvate from D-glyceraldehyde 3-phosphate: step 3/5. Its activity is regulated as follows. Inhibited to approximately 20% by EDTA. In terms of biological role, catalyzes the interconversion of 2-phosphoglycerate and 3-phosphoglycerate. This is 2,3-bisphosphoglycerate-independent phosphoglycerate mutase (apgM) from Pyrococcus furiosus (strain ATCC 43587 / DSM 3638 / JCM 8422 / Vc1).